The chain runs to 246 residues: Uridylate kinase (246 aa).

20–23 (KISG) provides a ligand contact to ATP. An involved in allosteric activation by GTP region spans residues 28–33 (GDQGYG). G62 contacts UMP. Residues G63 and R67 each contribute to the ATP site. UMP is bound by residues D82 and 143 to 150 (TGNPYFTT). The ATP site is built by T170, Y176, and D179.

This sequence belongs to the UMP kinase family. In terms of assembly, homohexamer.

It localises to the cytoplasm. The enzyme catalyses UMP + ATP = UDP + ADP. It participates in pyrimidine metabolism; CTP biosynthesis via de novo pathway; UDP from UMP (UMPK route): step 1/1. Its activity is regulated as follows. Allosterically activated by GTP. Inhibited by UTP. Catalyzes the reversible phosphorylation of UMP to UDP. The sequence is that of Uridylate kinase from Cereibacter sphaeroides (strain ATCC 17025 / ATH 2.4.3) (Rhodobacter sphaeroides).